Reading from the N-terminus, the 199-residue chain is Recombination protein RecR (199 aa).

The segment at C57–C72 adopts a C4-type zinc-finger fold. Residues T80–P176 enclose the Toprim domain.

Belongs to the RecR family.

In terms of biological role, may play a role in DNA repair. It seems to be involved in an RecBC-independent recombinational process of DNA repair. It may act with RecF and RecO. The sequence is that of Recombination protein RecR from Exiguobacterium sp. (strain ATCC BAA-1283 / AT1b).